Here is a 485-residue protein sequence, read N- to C-terminus: Glutamyl-tRNA(Gln) amidotransferase subunit A (485 aa).

Residues K76 and S151 each act as charge relay system in the active site. Residue S175 is the Acyl-ester intermediate of the active site.

The protein belongs to the amidase family. GatA subfamily. In terms of assembly, heterotrimer of A, B and C subunits.

It catalyses the reaction L-glutamyl-tRNA(Gln) + L-glutamine + ATP + H2O = L-glutaminyl-tRNA(Gln) + L-glutamate + ADP + phosphate + H(+). In terms of biological role, allows the formation of correctly charged Gln-tRNA(Gln) through the transamidation of misacylated Glu-tRNA(Gln) in organisms which lack glutaminyl-tRNA synthetase. The reaction takes place in the presence of glutamine and ATP through an activated gamma-phospho-Glu-tRNA(Gln). The polypeptide is Glutamyl-tRNA(Gln) amidotransferase subunit A (Thiobacillus denitrificans (strain ATCC 25259 / T1)).